The sequence spans 226 residues: Lysosomal-associated transmembrane protein 4B (226 aa).

The next 4 membrane-spanning stretches (helical) occupy residues 26–46, 72–92, 100–120, and 153–173; these read ILLG…LLSA, MCIA…ATYG, WIIP…LVAV, and CLVL…GYLI. A required for NEDD4 interaction region spans residues 205 to 221; that stretch reads PPYDDATVNSATKEPPP.

This sequence belongs to the LAPTM4/LAPTM5 transporter family. In terms of assembly, homooligomer; upon reaching the lysosomes. Interacts with MCOLN1. Interacts with NEDD4; may play a role in the lysosomal sorting of LAPTM4B; enhances HGS association with NEDD4; mediates inhibition of EGFR degradation. Interacts with PIP5K1C; promotes SNX5 association with LAPTM4B; kinase activity of PIP5K1C is required; interaction is regulated by phosphatidylinositol 4,5-bisphosphate generated by PIP5K1C. Interacts with HGS; promotes HGS ubiquitination. Interacts with SNX5. Interacts with SLC3A2 and SLC7A5; recruits SLC3A2 and SLC7A5 to lysosomes to promote leucine uptake into these organelles and is required for mTORC1 activation. Interacts with LRRC32; decreases TGFB1 production in regulatory T cells. Interacts with BECN1; competes with EGFR for LAPTM4B binding; regulates EGFR activity. Interacts with EGFR; positively correlates with EGFR activation. In terms of processing, undergoes proteolytic cleavage following delivery to the lysosomes. Ubiquitinated by NEDD4. In terms of tissue distribution, strongly expressed in fetal ovary, testis, adrenal gland, liver and uterus, and weakly expressed in the spleen.

The protein localises to the endomembrane system. It is found in the late endosome membrane. Its subcellular location is the cell membrane. The protein resides in the cell projection. It localises to the lysosome membrane. The protein localises to the endosome membrane. It is found in the endosome. Its subcellular location is the multivesicular body membrane. The protein resides in the multivesicular body lumen. Functionally, required for optimal lysosomal function. Blocks EGF-stimulated EGFR intraluminal sorting and degradation. Conversely by binding with the phosphatidylinositol 4,5-bisphosphate, regulates its PIP5K1C interaction, inhibits HGS ubiquitination and relieves LAPTM4B inhibition of EGFR degradation. Recruits SLC3A2 and SLC7A5 (the Leu transporter) to the lysosome, promoting entry of leucine and other essential amino acid (EAA) into the lysosome, stimulating activation of proton-transporting vacuolar (V)-ATPase protein pump (V-ATPase) and hence mTORC1 activation. Plays a role as negative regulator of TGFB1 production in regulatory T cells. Binds ceramide and facilitates its exit from late endosome in order to control cell death pathways. This Bos taurus (Bovine) protein is Lysosomal-associated transmembrane protein 4B.